The sequence spans 732 residues: 1,4-alpha-glucan branching enzyme GlgB (732 aa).

The active-site Nucleophile is the D408. E461 functions as the Proton donor in the catalytic mechanism.

Belongs to the glycosyl hydrolase 13 family. GlgB subfamily. As to quaternary structure, monomer.

The catalysed reaction is Transfers a segment of a (1-&gt;4)-alpha-D-glucan chain to a primary hydroxy group in a similar glucan chain.. It functions in the pathway glycan biosynthesis; glycogen biosynthesis. Its function is as follows. Catalyzes the formation of the alpha-1,6-glucosidic linkages in glycogen by scission of a 1,4-alpha-linked oligosaccharide from growing alpha-1,4-glucan chains and the subsequent attachment of the oligosaccharide to the alpha-1,6 position. This Rhodococcus jostii (strain RHA1) protein is 1,4-alpha-glucan branching enzyme GlgB.